Consider the following 82-residue polypeptide: DNA-directed RNA polymerase subunit Rpo5 (82 aa).

Belongs to the archaeal Rpo5/eukaryotic RPB5 RNA polymerase subunit family. In terms of assembly, part of the RNA polymerase complex.

It is found in the cytoplasm. The enzyme catalyses RNA(n) + a ribonucleoside 5'-triphosphate = RNA(n+1) + diphosphate. Its function is as follows. DNA-dependent RNA polymerase (RNAP) catalyzes the transcription of DNA into RNA using the four ribonucleoside triphosphates as substrates. This chain is DNA-directed RNA polymerase subunit Rpo5, found in Thermococcus celer.